A 101-amino-acid polypeptide reads, in one-letter code: Putative pterin-4-alpha-carbinolamine dehydratase (101 aa).

This sequence belongs to the pterin-4-alpha-carbinolamine dehydratase family.

It catalyses the reaction (4aS,6R)-4a-hydroxy-L-erythro-5,6,7,8-tetrahydrobiopterin = (6R)-L-erythro-6,7-dihydrobiopterin + H2O. This Ralstonia nicotianae (strain ATCC BAA-1114 / GMI1000) (Ralstonia solanacearum) protein is Putative pterin-4-alpha-carbinolamine dehydratase (phhB).